A 239-amino-acid polypeptide reads, in one-letter code: tRNA (guanine-N(1)-)-methyltransferase (239 aa).

S-adenosyl-L-methionine contacts are provided by residues G113 and 137-142 (LGDYVL).

It belongs to the RNA methyltransferase TrmD family. In terms of assembly, homodimer.

It is found in the cytoplasm. The enzyme catalyses guanosine(37) in tRNA + S-adenosyl-L-methionine = N(1)-methylguanosine(37) in tRNA + S-adenosyl-L-homocysteine + H(+). In terms of biological role, specifically methylates guanosine-37 in various tRNAs. This Cutibacterium acnes (strain DSM 16379 / KPA171202) (Propionibacterium acnes) protein is tRNA (guanine-N(1)-)-methyltransferase.